A 554-amino-acid chain; its full sequence is Rab GTPase-binding effector protein 2 (554 aa).

Over residues 1–15 the composition is skewed to low complexity; the sequence is MAAAPAALALDPQPQ. Disordered regions lie at residues 1–29, 167–250, and 375–395; these read MAAA…ELSR, IQRR…ETAS, and EQLP…DEAL. Residues 15–173 adopt a coiled-coil conformation; sequence QEEQKDASES…IQEIQRRPRQ (159 aa). The span at 16–29 shows a compositional bias: basic and acidic residues; that stretch reads EEQKDASESSELSR. Phosphoserine occurs at positions 176, 180, 187, and 191. Residues 274 to 512 are a coiled coil; the sequence is DSQWEQLQVE…LETSEQVQRD (239 aa). Residues 377-386 show a composition bias toward polar residues; it reads LPSSALQGSE.

The protein belongs to the rabaptin family. Heterodimer with RABGEF1. The dimer binds RAB5A that has been activated by GTP-binding. Interacts with SDCCAG8; this interaction is important for ciliogenesis regulation. Interacts with RAB4A; this interaction may mediate VEGFR2 cell surface expression.

Its subcellular location is the cytoplasm. The protein resides in the early endosome. The protein localises to the cytoskeleton. It localises to the microtubule organizing center. It is found in the centrosome. Its subcellular location is the cilium basal body. Functionally, plays a role in membrane trafficking and in homotypic early endosome fusion. Participates in arteriogenesis by regulating vascular endothelial growth factor receptor 2/VEGFR2 cell surface expression and endosomal trafficking. By interacting with SDCCAG8, localizes to centrosomes and plays a critical role in ciliogenesis. The protein is Rab GTPase-binding effector protein 2 (Rabep2) of Rattus norvegicus (Rat).